We begin with the raw amino-acid sequence, 419 residues long: Serine hydroxymethyltransferase (419 aa).

Residues Leu-121 and 125–127 (GHL) each bind (6S)-5,6,7,8-tetrahydrofolate. Lys-230 is subject to N6-(pyridoxal phosphate)lysine. Residue 355–357 (SPF) coordinates (6S)-5,6,7,8-tetrahydrofolate.

It belongs to the SHMT family. In terms of assembly, homodimer. Requires pyridoxal 5'-phosphate as cofactor.

It is found in the cytoplasm. It carries out the reaction (6R)-5,10-methylene-5,6,7,8-tetrahydrofolate + glycine + H2O = (6S)-5,6,7,8-tetrahydrofolate + L-serine. It functions in the pathway one-carbon metabolism; tetrahydrofolate interconversion. It participates in amino-acid biosynthesis; glycine biosynthesis; glycine from L-serine: step 1/1. Functionally, catalyzes the reversible interconversion of serine and glycine with tetrahydrofolate (THF) serving as the one-carbon carrier. This reaction serves as the major source of one-carbon groups required for the biosynthesis of purines, thymidylate, methionine, and other important biomolecules. Also exhibits THF-independent aldolase activity toward beta-hydroxyamino acids, producing glycine and aldehydes, via a retro-aldol mechanism. The chain is Serine hydroxymethyltransferase from Streptococcus equi subsp. equi (strain 4047).